The following is a 703-amino-acid chain: UvrABC system protein B (703 aa).

Positions 33-419 (ERIENGENDV…SDGVVEQIIR (387 aa)) constitute a Helicase ATP-binding domain. 46–53 (GATGTGKT) lines the ATP pocket. Residues 99–122 (YYDYYQPEAYIPQTDTYIEKDSNI) carry the Beta-hairpin motif. The Helicase C-terminal domain occupies 436–589 (QIDDLLAEIK…QIAYNQEHGI (154 aa)). One can recognise a UVR domain in the interval 659 to 694 (ADLIRQLSEQMHTAAEQLQFELAARLRDEIRDLKKE).

It belongs to the UvrB family. In terms of assembly, forms a heterotetramer with UvrA during the search for lesions. Interacts with UvrC in an incision complex.

The protein resides in the cytoplasm. The UvrABC repair system catalyzes the recognition and processing of DNA lesions. A damage recognition complex composed of 2 UvrA and 2 UvrB subunits scans DNA for abnormalities. Upon binding of the UvrA(2)B(2) complex to a putative damaged site, the DNA wraps around one UvrB monomer. DNA wrap is dependent on ATP binding by UvrB and probably causes local melting of the DNA helix, facilitating insertion of UvrB beta-hairpin between the DNA strands. Then UvrB probes one DNA strand for the presence of a lesion. If a lesion is found the UvrA subunits dissociate and the UvrB-DNA preincision complex is formed. This complex is subsequently bound by UvrC and the second UvrB is released. If no lesion is found, the DNA wraps around the other UvrB subunit that will check the other stand for damage. This Bifidobacterium longum (strain NCC 2705) protein is UvrABC system protein B.